The sequence spans 306 residues: Ubiquitin carboxyl-terminal hydrolase RPN11 (306 aa).

The residue at position 1 (methionine 1) is an N-acetylmethionine. The disordered stretch occupies residues 1–20 (MERLQRLMMNSKVGSADTGR). The MPN domain maps to 27–162 (VYISSIALLK…IDAFRLIDTG (136 aa)). The Zn(2+) site is built by histidine 109, histidine 111, and aspartate 122. Positions 109 to 122 (HSHPGFGCWLSSVD) match the JAMM motif motif.

Belongs to the peptidase M67A family. In terms of assembly, component of the lid subcomplex of the 19S proteasome regulatory particle complex (also named PA700 complex). The 26S proteasome consists of a 20S proteasome core and two 19S regulatory subunits. Interacts directly with RPN8 and STS1. N-acetylated by NAT3.

It catalyses the reaction Thiol-dependent hydrolysis of ester, thioester, amide, peptide and isopeptide bonds formed by the C-terminal Gly of ubiquitin (a 76-residue protein attached to proteins as an intracellular targeting signal).. In terms of biological role, component of the lid subcomplex of the 26S proteasome, a multiprotein complex involved in the ATP-dependent degradation of ubiquitinated proteins. RPN11 is the only catalytically active member of the lid and serves as the essential deubiquitinase of the proteasome. The sequence is that of Ubiquitin carboxyl-terminal hydrolase RPN11 (RPN11) from Saccharomyces cerevisiae (strain ATCC 204508 / S288c) (Baker's yeast).